The primary structure comprises 478 residues: Aspartate ammonia-lyase (478 aa).

Thr109, Ser148, Thr149, Asn150, and Thr195 together coordinate L-aspartate. An SS loop region spans residues 326–335 (GSSIMPGKVN). Ser327 acts as the Proton acceptor in catalysis. 2 residues coordinate L-aspartate: Ser328 and Lys333.

The protein belongs to the class-II fumarase/aspartase family. Aspartase subfamily. As to quaternary structure, homotetramer.

It catalyses the reaction L-aspartate = fumarate + NH4(+). Its function is as follows. Catalyzes the reversible conversion of L-aspartate to fumarate and ammonia. The sequence is that of Aspartate ammonia-lyase from Pseudomonas fluorescens.